A 626-amino-acid polypeptide reads, in one-letter code: Janus kinase and microtubule-interacting protein 1 (626 aa).

The tract at residues 1-25 (MSKKGRSKGEKPETETDSVQMANEE) is disordered. A mediates association with microtubules region spans residues 1 to 365 (MSKKGRSKGE…KLKSLTRENV (365 aa)). Coiled coils occupy residues 13-255 (ETET…EAER) and 284-413 (ERDV…DDLS). The tract at residues 365 to 626 (VEMKEKLSAQ…ILFEPKLKFV (262 aa)) is mediates interaction with TYK2 and GABBR1. Serine 382 is modified (phosphoserine). Residues 452-461 (ETLSETSYNT) show a composition bias toward polar residues. Residues 452-481 (ETLSETSYNTDRTDRTPATPEEDLDETTTR) are disordered. Threonine 470 bears the Phosphothreonine mark. The stretch at 490 to 604 (QLTREYQALQ…EFRVLELEVR (115 aa)) forms a coiled coil.

Belongs to the JAKMIP family. In terms of assembly, homodimer. Interacts with JAK1 and TYK2. Forms a complex with GABBR1 and KIF5B/kinesin-1. In terms of processing, phosphorylated. Specifically expressed in brain and testis by spermatogonia, spermatocytes, spermatozoa and Sertoli cells (at protein level).

The protein resides in the cytoplasm. The protein localises to the cytoskeleton. It is found in the membrane. Its function is as follows. Associates with microtubules and may play a role in the microtubule-dependent transport of the GABA-B receptor. May play a role in JAK1 signaling and regulate microtubule cytoskeleton rearrangements. This chain is Janus kinase and microtubule-interacting protein 1 (Jakmip1), found in Rattus norvegicus (Rat).